A 151-amino-acid chain; its full sequence is UPF0756 membrane protein Hore_21770 (151 aa).

Transmembrane regions (helical) follow at residues 7 to 29 (LLIITILGFLARSRVLVIAGLLL), 49 to 69 (IEIGLIFLLMAILSSLVLSPV), 84 to 104 (TVAIIAGVLATKFNGMGLDLL), 110 to 130 (FILGIIMGSLVGIVFFGGIPV), and 131 to 151 (GPLMAAGIGAVLFKIIEIIKG).

The protein belongs to the UPF0756 family.

It is found in the cell membrane. The protein is UPF0756 membrane protein Hore_21770 of Halothermothrix orenii (strain H 168 / OCM 544 / DSM 9562).